We begin with the raw amino-acid sequence, 407 residues long: 4-hydroxy-3-methylbut-2-en-1-yl diphosphate synthase (ferredoxin) (407 aa).

[4Fe-4S] cluster-binding residues include cysteine 316, cysteine 319, cysteine 350, and glutamate 357.

It belongs to the IspG family. The cofactor is [4Fe-4S] cluster.

It carries out the reaction (2E)-4-hydroxy-3-methylbut-2-enyl diphosphate + 2 oxidized [2Fe-2S]-[ferredoxin] + H2O = 2-C-methyl-D-erythritol 2,4-cyclic diphosphate + 2 reduced [2Fe-2S]-[ferredoxin] + H(+). It functions in the pathway isoprenoid biosynthesis; isopentenyl diphosphate biosynthesis via DXP pathway; isopentenyl diphosphate from 1-deoxy-D-xylulose 5-phosphate: step 5/6. Converts 2C-methyl-D-erythritol 2,4-cyclodiphosphate (ME-2,4cPP) into 1-hydroxy-2-methyl-2-(E)-butenyl 4-diphosphate. In Cyanothece sp. (strain PCC 7425 / ATCC 29141), this protein is 4-hydroxy-3-methylbut-2-en-1-yl diphosphate synthase (ferredoxin).